We begin with the raw amino-acid sequence, 506 residues long: MKIGFNHEKYLEEQSKYILERVNNHDKLYIEFGGKLLADLHAKRVLPGFDENAKIKVLNKLKDKIEVIICVYAGDIERNKIRGDFGITYDMDVFRLIDDLRENDLKVNSVVITRYEDRPSTALFITRLERRGIKVYRHFATKGYPSDVDTIVSDEGYGKNAYIETTKPIVVVTAPGPGSGKLATCLSQLYHEYKRGKDVGYSKFETFPVWNVPLKHPLNIAYEAATVDLNDVNMIDPFHLEEYGEIAVNYNRDIEAFPLLKRIIEKITGKKSIYQSPTDMGVNRVGFGITDDEVVRKASEQEIIRRYFKTGCDYKKGNTDLETFKRSEFIMHSLGLKEEDRKVVTFARKKLELLNQEKDDKNDKQKTLSAIAFEMPDGKIITGKKSSLMDAPSAAILNSLKYLSNFDDELLLISPTILEPIIKLKEKTLKNRYIPLDCEEILIALSITAATNPMAEVALSKLSQLEGVQAHSTHILGRNDEQYLRKLGIDVTSDQVFPTENLYYNQ.

Belongs to the UPF0371 family.

The protein is UPF0371 protein FN1121 of Fusobacterium nucleatum subsp. nucleatum (strain ATCC 25586 / DSM 15643 / BCRC 10681 / CIP 101130 / JCM 8532 / KCTC 2640 / LMG 13131 / VPI 4355).